Reading from the N-terminus, the 316-residue chain is 1-aminocyclopropane-1-carboxylate oxidase 4 (316 aa).

The 101-residue stretch at 153 to 253 (PNFGTKVSNY…RMSLASFYNP (101 aa)) folds into the Fe2OG dioxygenase domain. Fe cation-binding residues include His177, Asp179, and His234.

Belongs to the iron/ascorbate-dependent oxidoreductase family. The cofactor is Fe cation. Expressed in all of the floral organs examined apart from the sepals.

The catalysed reaction is 1-aminocyclopropane-1-carboxylate + L-ascorbate + O2 = ethene + L-dehydroascorbate + hydrogen cyanide + CO2 + 2 H2O. It functions in the pathway alkene biosynthesis; ethylene biosynthesis via S-adenosyl-L-methionine; ethylene from S-adenosyl-L-methionine: step 2/2. This Solanum lycopersicum (Tomato) protein is 1-aminocyclopropane-1-carboxylate oxidase 4 (ACO4).